We begin with the raw amino-acid sequence, 701 residues long: Mediator of RNA polymerase II transcription subunit 25 (701 aa).

Disordered stretches follow at residues 277-388 (AAQK…GAQQ) and 580-617 (AAATGNQQAPVTGAPPNQVQGQAQAPGGGMLRLQNPGA). Residues 286 to 306 (ANQQQKNRFGQISTPPFSQSP) show a composition bias toward polar residues. 2 stretches are compositionally biased toward low complexity: residues 314 to 367 (PSLS…NNQQ) and 593 to 604 (APPNQVQGQAQA). The LXXLL motif motif lies at 621 to 625 (LRSLL). Positions 650 to 689 (APGGGAQMQPQWRQPHQGPLMVPTGPRGPVTQNPGMPSVS) are disordered. Residues 679-689 (VTQNPGMPSVS) show a composition bias toward polar residues.

Belongs to the Mediator complex subunit 25 family. In terms of assembly, component of the Mediator complex.

The protein localises to the nucleus. Component of the Mediator complex, a coactivator involved in the regulated transcription of nearly all RNA polymerase II-dependent genes. Mediator functions as a bridge to convey information from gene-specific regulatory proteins to the basal RNA polymerase II transcription machinery. Mediator is recruited to promoters by direct interactions with regulatory proteins and serves as a scaffold for the assembly of a functional preinitiation complex with RNA polymerase II and the general transcription factors. This chain is Mediator of RNA polymerase II transcription subunit 25 (med25), found in Danio rerio (Zebrafish).